We begin with the raw amino-acid sequence, 176 residues long: Ribosome maturation factor RimM (176 aa).

The PRC barrel domain maps to 97–176 (EDDFYWRDLI…QICVDWDPGF (80 aa)).

It belongs to the RimM family. In terms of assembly, binds ribosomal protein uS19.

It localises to the cytoplasm. In terms of biological role, an accessory protein needed during the final step in the assembly of 30S ribosomal subunit, possibly for assembly of the head region. Essential for efficient processing of 16S rRNA. May be needed both before and after RbfA during the maturation of 16S rRNA. It has affinity for free ribosomal 30S subunits but not for 70S ribosomes. This Colwellia psychrerythraea (strain 34H / ATCC BAA-681) (Vibrio psychroerythus) protein is Ribosome maturation factor RimM.